Reading from the N-terminus, the 451-residue chain is Mannan endo-1,6-alpha-mannosidase DCW1 (451 aa).

Positions 1–21 are cleaved as a signal peptide; it reads MLAVTFTAAAVLSLLAASGRT. N-linked (GlcNAc...) asparagine glycosylation is found at asparagine 84, asparagine 109, asparagine 203, asparagine 242, asparagine 267, and asparagine 291. The disordered stretch occupies residues 397–419; it reads AMNGGTSPGDPAAGTKTKAENLP. The GPI-anchor amidated aspartate moiety is linked to residue aspartate 427. Positions 428 to 451 are cleaved as a propeptide — removed in mature form; sequence RAGAGIITALIGSSFLACTLWLII.

This sequence belongs to the glycosyl hydrolase 76 family.

The protein resides in the secreted. It is found in the cell wall. The protein localises to the cell membrane. The enzyme catalyses Random hydrolysis of (1-&gt;6)-alpha-D-mannosidic linkages in unbranched (1-&gt;6)-mannans.. In terms of biological role, required for normal synthesis of the cell wall. The sequence is that of Mannan endo-1,6-alpha-mannosidase DCW1 (DCW1) from Eremothecium gossypii (strain ATCC 10895 / CBS 109.51 / FGSC 9923 / NRRL Y-1056) (Yeast).